The chain runs to 580 residues: Proline--tRNA ligase (580 aa).

Belongs to the class-II aminoacyl-tRNA synthetase family. ProS type 1 subfamily. In terms of assembly, homodimer.

It localises to the cytoplasm. It carries out the reaction tRNA(Pro) + L-proline + ATP = L-prolyl-tRNA(Pro) + AMP + diphosphate. Catalyzes the attachment of proline to tRNA(Pro) in a two-step reaction: proline is first activated by ATP to form Pro-AMP and then transferred to the acceptor end of tRNA(Pro). As ProRS can inadvertently accommodate and process non-cognate amino acids such as alanine and cysteine, to avoid such errors it has two additional distinct editing activities against alanine. One activity is designated as 'pretransfer' editing and involves the tRNA(Pro)-independent hydrolysis of activated Ala-AMP. The other activity is designated 'posttransfer' editing and involves deacylation of mischarged Ala-tRNA(Pro). The misacylated Cys-tRNA(Pro) is not edited by ProRS. The polypeptide is Proline--tRNA ligase (Polynucleobacter necessarius subsp. necessarius (strain STIR1)).